Consider the following 200-residue polypeptide: MHIHQTTFIKSAVKPADYPPVDLPEIAFAGRSNVGKSSLINVIVERKALVRTSSTPGRTQLINFFQVTGVPFSLNLVDLPGYGYAKVPLDVKRQWGPMMERYLSGRESLRGVVLILDIRRIPSEEDLQMLNWLRSYKRRPIIVLTKCDKVTKNERARQTAAIAARLEMDKSQLIHFSALSKDGRDTVWQAIQDAVEEDAP.

An EngB-type G domain is found at 22 to 197; the sequence is DLPEIAFAGR…WQAIQDAVEE (176 aa). Residues 30 to 37, 57 to 61, 78 to 81, 145 to 148, and 176 to 178 contribute to the GTP site; these read GRSNVGKS, GRTQL, DLPG, TKCD, and FSA. Mg(2+)-binding residues include S37 and T59.

Belongs to the TRAFAC class TrmE-Era-EngA-EngB-Septin-like GTPase superfamily. EngB GTPase family. Mg(2+) is required as a cofactor.

Functionally, necessary for normal cell division and for the maintenance of normal septation. The chain is Probable GTP-binding protein EngB from Trichlorobacter lovleyi (strain ATCC BAA-1151 / DSM 17278 / SZ) (Geobacter lovleyi).